The following is a 101-amino-acid chain: NAD(P)H-quinone oxidoreductase subunit 4L, chloroplastic (101 aa).

Transmembrane regions (helical) follow at residues 2 to 22 (MLEHVLVLSAYLFSIGIYGLI), 32 to 52 (MCLELILNAVNLNFVTFSDFF), and 61 to 81 (IFSIFVIAIAAAEAAIGPAIV).

Belongs to the complex I subunit 4L family. As to quaternary structure, NDH is composed of at least 16 different subunits, 5 of which are encoded in the nucleus.

It is found in the plastid. Its subcellular location is the chloroplast thylakoid membrane. It carries out the reaction a plastoquinone + NADH + (n+1) H(+)(in) = a plastoquinol + NAD(+) + n H(+)(out). It catalyses the reaction a plastoquinone + NADPH + (n+1) H(+)(in) = a plastoquinol + NADP(+) + n H(+)(out). NDH shuttles electrons from NAD(P)H:plastoquinone, via FMN and iron-sulfur (Fe-S) centers, to quinones in the photosynthetic chain and possibly in a chloroplast respiratory chain. The immediate electron acceptor for the enzyme in this species is believed to be plastoquinone. Couples the redox reaction to proton translocation, and thus conserves the redox energy in a proton gradient. This chain is NAD(P)H-quinone oxidoreductase subunit 4L, chloroplastic, found in Manihot esculenta (Cassava).